The sequence spans 156 residues: Small ribosomal subunit protein uS7 (156 aa).

As to quaternary structure, part of the 30S ribosomal subunit. Contacts proteins S9 and S11. Binds to the C-terminus of IF3 and to the C-terminus of Era.

In terms of biological role, one of the primary rRNA binding proteins, it binds directly to 3'-end of the 16S rRNA where it nucleates assembly of the head domain of the 30S subunit. Is located at the subunit interface close to the decoding center. Binds mRNA and the E site tRNA blocking its exit path in the ribosome. This blockage implies that this section of the ribosome must be able to move to release the deacetylated tRNA. The chain is Small ribosomal subunit protein uS7 (rpsG) from Thermus thermophilus (strain ATCC 27634 / DSM 579 / HB8).